The sequence spans 194 residues: NADH-quinone oxidoreductase subunit B (194 aa).

The tract at residues 1 to 26 (MGLTPSATKPEIAQAPQGIVDPSTGR) is disordered. [4Fe-4S] cluster-binding residues include C73, C74, C138, and C168.

The protein belongs to the complex I 20 kDa subunit family. NDH-1 is composed of 14 different subunits. Subunits NuoB, C, D, E, F, and G constitute the peripheral sector of the complex. [4Fe-4S] cluster serves as cofactor.

It is found in the cell inner membrane. The catalysed reaction is a quinone + NADH + 5 H(+)(in) = a quinol + NAD(+) + 4 H(+)(out). NDH-1 shuttles electrons from NADH, via FMN and iron-sulfur (Fe-S) centers, to quinones in the respiratory chain. The immediate electron acceptor for the enzyme in this species is believed to be ubiquinone. Couples the redox reaction to proton translocation (for every two electrons transferred, four hydrogen ions are translocated across the cytoplasmic membrane), and thus conserves the redox energy in a proton gradient. The protein is NADH-quinone oxidoreductase subunit B of Xanthobacter autotrophicus (strain ATCC BAA-1158 / Py2).